The following is an 861-amino-acid chain: Translation initiation factor IF-2 (861 aa).

2 disordered regions span residues 1-69 (MSDA…GESA) and 92-273 (ARAR…GREK). Gly residues predominate over residues 53–65 (GGPGGKQGGGAKG). The span at 94–108 (ARAEAADREAQKKQD) shows a compositional bias: basic and acidic residues. Low complexity predominate over residues 109-120 (AAAMAQRAASEQ). Basic and acidic residues-rich tracts occupy residues 121–155 (RQLEEQRERVAREAREAEEAAQKAIEDEARLKAEA) and 163–186 (DSGRKRDDESSRRRPPAKDEKRTP). Over residues 213–223 (PGPAAKQQPAR) the composition is skewed to low complexity. Over residues 255–273 (RAREREKQRRQDTSGGREK) the composition is skewed to basic and acidic residues. The tr-type G domain maps to 357–527 (PRAPVIAVMG…ALQAELLDLK (171 aa)). The G1 stretch occupies residues 366–373 (GHVDHGKT). Position 366 to 373 (366 to 373 (GHVDHGKT)) interacts with GTP. A G2 region spans residues 391 to 395 (GITQH). The segment at 413–416 (DTPG) is G3. GTP-binding positions include 413 to 417 (DTPGH) and 467 to 470 (NKCD). The tract at residues 467 to 470 (NKCD) is G4. Residues 503–505 (SAK) form a G5 region.

This sequence belongs to the TRAFAC class translation factor GTPase superfamily. Classic translation factor GTPase family. IF-2 subfamily.

It localises to the cytoplasm. In terms of biological role, one of the essential components for the initiation of protein synthesis. Protects formylmethionyl-tRNA from spontaneous hydrolysis and promotes its binding to the 30S ribosomal subunits. Also involved in the hydrolysis of GTP during the formation of the 70S ribosomal complex. The polypeptide is Translation initiation factor IF-2 (Maricaulis maris (strain MCS10) (Caulobacter maris)).